The chain runs to 623 residues: DNA-directed RNA polymerase subunit beta' (623 aa).

Residues cysteine 70, cysteine 72, cysteine 85, and cysteine 88 each coordinate Zn(2+). 3 residues coordinate Mg(2+): aspartate 466, aspartate 468, and aspartate 470.

The protein belongs to the RNA polymerase beta' chain family. RpoC1 subfamily. In terms of assembly, in plastids the minimal PEP RNA polymerase catalytic core is composed of four subunits: alpha, beta, beta', and beta''. When a (nuclear-encoded) sigma factor is associated with the core the holoenzyme is formed, which can initiate transcription. Mg(2+) is required as a cofactor. Zn(2+) serves as cofactor.

It localises to the plastid. The protein localises to the chloroplast. It carries out the reaction RNA(n) + a ribonucleoside 5'-triphosphate = RNA(n+1) + diphosphate. Its function is as follows. DNA-dependent RNA polymerase catalyzes the transcription of DNA into RNA using the four ribonucleoside triphosphates as substrates. In Rhodomonas salina (Cryptomonas salina), this protein is DNA-directed RNA polymerase subunit beta'.